The following is a 166-amino-acid chain: Large ribosomal subunit protein uL10 (166 aa).

It belongs to the universal ribosomal protein uL10 family. In terms of assembly, part of the ribosomal stalk of the 50S ribosomal subunit. The N-terminus interacts with L11 and the large rRNA to form the base of the stalk. The C-terminus forms an elongated spine to which L12 dimers bind in a sequential fashion forming a multimeric L10(L12)X complex.

Forms part of the ribosomal stalk, playing a central role in the interaction of the ribosome with GTP-bound translation factors. This is Large ribosomal subunit protein uL10 from Shouchella clausii (strain KSM-K16) (Alkalihalobacillus clausii).